The following is a 219-amino-acid chain: Protein-L-isoaspartate O-methyltransferase (219 aa).

Serine 64 is an active-site residue.

Belongs to the methyltransferase superfamily. L-isoaspartyl/D-aspartyl protein methyltransferase family.

Its subcellular location is the cytoplasm. It catalyses the reaction [protein]-L-isoaspartate + S-adenosyl-L-methionine = [protein]-L-isoaspartate alpha-methyl ester + S-adenosyl-L-homocysteine. Catalyzes the methyl esterification of L-isoaspartyl residues in peptides and proteins that result from spontaneous decomposition of normal L-aspartyl and L-asparaginyl residues. It plays a role in the repair and/or degradation of damaged proteins. This is Protein-L-isoaspartate O-methyltransferase from Chlorobaculum parvum (strain DSM 263 / NCIMB 8327) (Chlorobium vibrioforme subsp. thiosulfatophilum).